Reading from the N-terminus, the 165-residue chain is Phosphopantetheine adenylyltransferase (165 aa).

It belongs to the eukaryotic CoaD family.

The protein resides in the cytoplasm. The enzyme catalyses (R)-4'-phosphopantetheine + ATP + H(+) = 3'-dephospho-CoA + diphosphate. The protein operates within cofactor biosynthesis; coenzyme A biosynthesis. Its function is as follows. Reversibly transfers an adenylyl group from ATP to 4'-phosphopantetheine, yielding dephospho-CoA (dPCoA) and pyrophosphate. This chain is Phosphopantetheine adenylyltransferase, found in Thermococcus kodakarensis (strain ATCC BAA-918 / JCM 12380 / KOD1) (Pyrococcus kodakaraensis (strain KOD1)).